Consider the following 2358-residue polypeptide: Cell wall alpha-1,3-glucan synthase mok13 (2358 aa).

Over residues 1645 to 1659 (EGLENEENELKDKAP) the composition is skewed to basic and acidic residues. Residues 1645-1669 (EGLENEENELKDKAPPNEPNVGSLF) form a disordered region.

This sequence belongs to the glycosyltransferase group 1 family.

The enzyme catalyses [(1-&gt;3)-alpha-D-glucosyl](n) + UDP-alpha-D-glucose = [(1-&gt;3)-alpha-D-glucosyl](n+1) + UDP + H(+). This is Cell wall alpha-1,3-glucan synthase mok13 (mok13) from Schizosaccharomyces pombe (strain 972 / ATCC 24843) (Fission yeast).